The following is a 179-amino-acid chain: Large ribosomal subunit protein uL5 (179 aa).

The protein belongs to the universal ribosomal protein uL5 family. As to quaternary structure, part of the 50S ribosomal subunit; part of the 5S rRNA/L5/L18/L25 subcomplex. Contacts the 5S rRNA and the P site tRNA. Forms a bridge to the 30S subunit in the 70S ribosome.

Functionally, this is one of the proteins that bind and probably mediate the attachment of the 5S RNA into the large ribosomal subunit, where it forms part of the central protuberance. In the 70S ribosome it contacts protein S13 of the 30S subunit (bridge B1b), connecting the 2 subunits; this bridge is implicated in subunit movement. Contacts the P site tRNA; the 5S rRNA and some of its associated proteins might help stabilize positioning of ribosome-bound tRNAs. This is Large ribosomal subunit protein uL5 from Maridesulfovibrio salexigens (strain ATCC 14822 / DSM 2638 / NCIMB 8403 / VKM B-1763) (Desulfovibrio salexigens).